The chain runs to 868 residues: DNA topoisomerase 1 (868 aa).

The Toprim domain maps to 3 to 147 (KSLVIVESPA…RYKRVVFNEI (145 aa)). Glu-9 is a Mg(2+) binding site. A disordered region spans residues 34–70 (IRDLPTSGSSSSKEPAAKGRKSASEAPALSPKEKARR). A Mg(2+)-binding site is contributed by Asp-116. One can recognise a Topo IA-type catalytic domain in the interval 163–580 (DINRVNAQQA…EFYGDFKKKL (418 aa)). The tract at residues 197–202 (SAGRVQ) is interaction with DNA. Tyr-324 serves as the catalytic O-(5'-phospho-DNA)-tyrosine intermediate. 3 C4-type zinc fingers span residues 602 to 633 (CREC…KERC), 664 to 691 (CPIC…NPDC), and 713 to 738 (CDKC…NPTC).

Belongs to the type IA topoisomerase family. In terms of assembly, monomer. Mg(2+) serves as cofactor.

The enzyme catalyses ATP-independent breakage of single-stranded DNA, followed by passage and rejoining.. In terms of biological role, releases the supercoiling and torsional tension of DNA, which is introduced during the DNA replication and transcription, by transiently cleaving and rejoining one strand of the DNA duplex. Introduces a single-strand break via transesterification at a target site in duplex DNA. The scissile phosphodiester is attacked by the catalytic tyrosine of the enzyme, resulting in the formation of a DNA-(5'-phosphotyrosyl)-enzyme intermediate and the expulsion of a 3'-OH DNA strand. The free DNA strand then undergoes passage around the unbroken strand, thus removing DNA supercoils. Finally, in the religation step, the DNA 3'-OH attacks the covalent intermediate to expel the active-site tyrosine and restore the DNA phosphodiester backbone. In Pseudomonas aeruginosa (strain ATCC 15692 / DSM 22644 / CIP 104116 / JCM 14847 / LMG 12228 / 1C / PRS 101 / PAO1), this protein is DNA topoisomerase 1.